A 239-amino-acid chain; its full sequence is Methylthioribulose-1-phosphate dehydratase (239 aa).

C94 is a substrate binding site. Zn(2+) is bound by residues H112 and H114. Catalysis depends on E136, which acts as the Proton donor/acceptor. H192 provides a ligand contact to Zn(2+).

Belongs to the aldolase class II family. MtnB subfamily. Zn(2+) is required as a cofactor.

The protein resides in the cytoplasm. It carries out the reaction 5-(methylsulfanyl)-D-ribulose 1-phosphate = 5-methylsulfanyl-2,3-dioxopentyl phosphate + H2O. It functions in the pathway amino-acid biosynthesis; L-methionine biosynthesis via salvage pathway; L-methionine from S-methyl-5-thio-alpha-D-ribose 1-phosphate: step 2/6. Its function is as follows. Catalyzes the dehydration of methylthioribulose-1-phosphate (MTRu-1-P) into 2,3-diketo-5-methylthiopentyl-1-phosphate (DK-MTP-1-P). Functions in the methionine salvage pathway. May play a role in apoptosis. This chain is Methylthioribulose-1-phosphate dehydratase, found in Xenopus laevis (African clawed frog).